Here is a 129-residue protein sequence, read N- to C-terminus: Glycine cleavage system H protein (129 aa).

A Lipoyl-binding domain is found at 24-106; the sequence is TYTVGITEHA…YAGGWIFKIK (83 aa). Position 65 is an N6-lipoyllysine (K65).

It belongs to the GcvH family. In terms of assembly, the glycine cleavage system is composed of four proteins: P, T, L and H. It depends on (R)-lipoate as a cofactor.

In terms of biological role, the glycine cleavage system catalyzes the degradation of glycine. The H protein shuttles the methylamine group of glycine from the P protein to the T protein. The protein is Glycine cleavage system H protein of Escherichia coli O7:K1 (strain IAI39 / ExPEC).